The chain runs to 219 residues: GPI ethanolamine phosphate transferase, stabilizing subunit (219 aa).

Helical transmembrane passes span 11–31, 42–62, 86–106, 113–133, 155–175, and 189–209; these read YTNLLCVFSIFLSIFIPSFFV, TWLCICSASVTTVNLLSYLVV, CFLMSCFLLHIIFVLYGAPLI, FLFAVVLSTFTTVPCLCLLGP, LQITTISSFTGAWLGAFPIPL, and TLGATFGYVAGLVISPLWIYW.

The protein belongs to the PIGF family. Part of the ethanolamine phosphate transferase 3 complex composed by PIGO and PIGF. Part of the ethanolamine phosphate transferase 2 complex with PIGG. PIGF is required to stabilize PIGG and PIGO.

The protein resides in the endoplasmic reticulum membrane. The protein operates within glycolipid biosynthesis; glycosylphosphatidylinositol-anchor biosynthesis. Its function is as follows. Stabilizing subunit of the ethanolamine phosphate transferase 3 and ethanolamine phosphate transferase 2 complexes that sequentially transfer an ethanolamine phosphate (EtNP) from a phosphatidylethanolamine (PE) to the 6-OH position of the third alpha-1,2-linked mannose and the second alpha-1,6-linked mannose of the alpha-D-Man-(1-&gt;2)-alpha-D-Man-(1-&gt;6)-2-PEtn-alpha-D-Man-(1-&gt;4)-alpha-D-GlcN-(1-&gt;6)-(1-radyl,2-acyl-sn-glycero-3-phospho)-2-acyl-inositol (also termed H6) intermediate to generate a 6-PEtn-alpha-D-Man-(1-&gt;2)-6-PEtn-alpha-D-Man-(1-&gt;6)-2-PEtn-alpha-D-Man-(1-&gt;4)-alpha-D-GlcN-(1-&gt;6)-(1-radyl,2-acyl-sn-glycero-3-phospho)-2-acyl-inositol (also termed H8). Participates in the tenth and eleventh steps of the glycosylphosphatidylinositol-anchor biosynthesis, in association with PIGO and PIGG, respectively. In Mus musculus (Mouse), this protein is GPI ethanolamine phosphate transferase, stabilizing subunit.